The chain runs to 215 residues: S-crystallin 2 (215 aa).

In terms of domain architecture, GST N-terminal spans 2–80 (PSYTLNYFNH…YLAREFGFHG (79 aa)). A GST C-terminal domain is found at 82–215 (NNMEMARVEY…YLKKRSSTEF (134 aa)).

The protein belongs to the GST superfamily. Lens.

In terms of biological role, S-crystallins are structural components of squids and octopi eye lens. Contains relatively little if any GST activity. The chain is S-crystallin 2 from Enteroctopus dofleini (North Pacific giant octopus).